The sequence spans 921 residues: Translation initiation factor IF-2 (921 aa).

Disordered regions lie at residues 81 to 118 (AVAE…AAAP), 175 to 194 (PVVE…ANQA), and 219 to 301 (VAPA…KKHE). Pro residues predominate over residues 96–112 (PAAPTPPEVPAAAPAPP). A compositionally biased stretch (low complexity) spans 229-241 (RPSPAAGAPSRGA). Basic and acidic residues predominate over residues 292-301 (KKKEQPKKHE). A tr-type G domain is found at 421-590 (KRPPVVTIMG…LLQADLMELK (170 aa)). Residues 430–437 (GHVDHGKT) form a G1 region. 430 to 437 (GHVDHGKT) provides a ligand contact to GTP. Residues 455–459 (GITQH) are G2. A G3 region spans residues 476–479 (DTPG). GTP-binding positions include 476–480 (DTPGH) and 530–533 (NKID). The interval 530–533 (NKID) is G4. Positions 566 to 568 (SAK) are G5.

This sequence belongs to the TRAFAC class translation factor GTPase superfamily. Classic translation factor GTPase family. IF-2 subfamily.

It localises to the cytoplasm. Its function is as follows. One of the essential components for the initiation of protein synthesis. Protects formylmethionyl-tRNA from spontaneous hydrolysis and promotes its binding to the 30S ribosomal subunits. Also involved in the hydrolysis of GTP during the formation of the 70S ribosomal complex. This Pelobacter propionicus (strain DSM 2379 / NBRC 103807 / OttBd1) protein is Translation initiation factor IF-2.